The following is a 437-amino-acid chain: La-related protein 7 homolog (437 aa).

The 108-residue stretch at 38 to 145 folds into the HTH La-type RNA-binding domain; that stretch reads SKSPSLTIPK…KRKKKFDNRT (108 aa). The xRRM domain occupies 279–397; it reads ELSQSCFLKI…QRSSIDEIKA (119 aa). Residues 417-427 are compositionally biased toward basic residues; it reads RRPVSKRKNKA. Residues 417 to 437 form a disordered region; that stretch reads RRPVSKRKNKAINKMSTEVKK.

It belongs to the LARP7 family. As to quaternary structure, component of the telomerase holoenzyme complex composed minimally of the catalytic subunit p123 and the telomerase RNA template component. The mature form of the protein is a protein of 43 kDa, which is derived from a 51 kDa precursor by proteolytic cleavage.

The protein localises to the nucleus. It is found in the chromosome. Its subcellular location is the telomere. In terms of biological role, RNA-binding protein required for assembly of the holoenzyme telomerase ribonucleoprotein (RNP) complex. Specifically binds telomerase RNA and promotes its assembly with catalytic subunit p123, thereby stimulating enzymatic activity and processivity of p123. Telomerase is a ribonucleoprotein enzyme essential that copies new telomeric repeats onto chromosome ends and functions to maintain cell division. The chain is La-related protein 7 homolog from Euplotes aediculatus (Ciliate).